We begin with the raw amino-acid sequence, 359 residues long: Glucose 1-dehydrogenase (359 aa).

Position 39 (Cys-39) interacts with Zn(2+). Substrate is bound at residue Thr-41. Zn(2+) is bound by residues His-64 and Glu-65. Residues Glu-116 and Glu-152 each coordinate substrate. Glu-152 is a binding site for Zn(2+). 183 to 186 (AGPI) serves as a coordination point for NADP(+).

Belongs to the zinc-containing alcohol dehydrogenase family. Glucose 1-dehydrogenase subfamily. The cofactor is Zn(2+).

It carries out the reaction D-glucose + NAD(+) = D-glucono-1,5-lactone + NADH + H(+). The enzyme catalyses D-glucose + NADP(+) = D-glucono-1,5-lactone + NADPH + H(+). Catalyzes the NAD(P)(+)-dependent oxidation of D-glucose to D-gluconate via gluconolactone. Can utilize both NAD(+) and NADP(+) as electron acceptor. Is involved in the degradation of glucose through a non-phosphorylative variant of the Entner-Doudoroff pathway. The chain is Glucose 1-dehydrogenase from Methanocella arvoryzae (strain DSM 22066 / NBRC 105507 / MRE50).